The sequence spans 303 residues: Acetyltransferase ataH (303 aa).

The signal sequence occupies residues 1 to 23 (MPTTAAFLRALYILTTLRGIGTS). Transmembrane regions (helical) follow at residues 42–62 (FLLH…MMTF), 194–214 (LVFA…GIML), and 257–277 (GYIW…FPLF).

Belongs to the wax synthase family.

The protein resides in the membrane. It functions in the pathway mycotoxin biosynthesis. Acetyltransferase; part of the gene cluster that mediates the biosynthesis of acetylaranotin, a member of the epipolythiodioxopiperazine (ETP) class of toxins characterized by a disulfide-bridged cyclic dipeptide. The first step of acetylaranotin biosynthesis is performed by the NRPS ataP which produces diketopiperazine cyclo-L-Phe-L-Phe via the condensation of 2 phenylalanines (L-Phe). The ataC domain of ataTC then catalyzes the formation of bishydroxylation of cyclo-L-Phe-L-Phe. The glutathione S-transferase domain ataG in ataIMG further catalyzes the conjugation of two glutathiones to the bishydroxylated intermediate. Next, the dipeptidase ataJ removes the Glu residues. The following step is performed by the carbon sulfur lyase domain ataI of ataIMG which may convert the bis-cysteinyl adduct to yield an epidithiol intermediate. The ataT domain from ataTC then catalyzes the oxidation of the free dithiols, followed by a cyclization step catalyzed by the cytochrome P450 ataF. AtaF probably acts as an epoxidase to promote a dual epoxidation formation at C8 and C9 along with C8' and C9', followed by the spontaneous nucleophilic attack of the amide nitrogens N10 and N10' to yield an intermediate with the pyrrolidine partial structure. The final steps of acetylaranotin biosynthesis involve the acetylation and ring rearrangement of an epitetrathiodiketopiperazine intermediate to produce acetylaranotin. AtaH probably catalyzes the acetylation of epitetrathiodiketopiperazine to produce a diacetate and ataY is responsible for the formation of the dihydrooxepin moiety that converts the diacetate intermediate to acetylaranotin via acetylapoaranotin. Both enzymes could function independently in the absence of the other. The acetylaranotin bis-thiomethyltransferase ataS located outside of acetylaranotin gene cluster is the main thiomethyltransferase responsible for converting acetylaranotin and its related intermediates to their methylated forms. In Aspergillus terreus (strain NIH 2624 / FGSC A1156), this protein is Acetyltransferase ataH.